The following is a 271-amino-acid chain: Ribosomal RNA small subunit methyltransferase I (271 aa).

The protein belongs to the methyltransferase superfamily. RsmI family.

The protein resides in the cytoplasm. It catalyses the reaction cytidine(1402) in 16S rRNA + S-adenosyl-L-methionine = 2'-O-methylcytidine(1402) in 16S rRNA + S-adenosyl-L-homocysteine + H(+). Its function is as follows. Catalyzes the 2'-O-methylation of the ribose of cytidine 1402 (C1402) in 16S rRNA. The protein is Ribosomal RNA small subunit methyltransferase I of Campylobacter fetus subsp. fetus (strain 82-40).